The sequence spans 123 residues: Large ribosomal subunit protein uL14 (123 aa).

It belongs to the universal ribosomal protein uL14 family. Part of the 50S ribosomal subunit. Forms a cluster with proteins L3 and L19. In the 70S ribosome, L14 and L19 interact and together make contacts with the 16S rRNA in bridges B5 and B8.

Functionally, binds to 23S rRNA. Forms part of two intersubunit bridges in the 70S ribosome. In Sodalis glossinidius (strain morsitans), this protein is Large ribosomal subunit protein uL14.